A 343-amino-acid polypeptide reads, in one-letter code: UDP-3-O-acylglucosamine N-acyltransferase 2 (343 aa).

The active-site Proton acceptor is the His-251.

It belongs to the transferase hexapeptide repeat family. LpxD subfamily. In terms of assembly, homotrimer.

It carries out the reaction a UDP-3-O-[(3R)-3-hydroxyacyl]-alpha-D-glucosamine + a (3R)-hydroxyacyl-[ACP] = a UDP-2-N,3-O-bis[(3R)-3-hydroxyacyl]-alpha-D-glucosamine + holo-[ACP] + H(+). Its pathway is bacterial outer membrane biogenesis; LPS lipid A biosynthesis. Catalyzes the N-acylation of UDP-3-O-acylglucosamine using 3-hydroxyacyl-ACP as the acyl donor. Is involved in the biosynthesis of lipid A, a phosphorylated glycolipid that anchors the lipopolysaccharide to the outer membrane of the cell. The chain is UDP-3-O-acylglucosamine N-acyltransferase 2 from Legionella pneumophila subsp. pneumophila (strain Philadelphia 1 / ATCC 33152 / DSM 7513).